The primary structure comprises 305 residues: Ornithine carbamoyltransferase (305 aa).

Carbamoyl phosphate contacts are provided by residues 54 to 57 (STRT), glutamine 81, arginine 105, and 132 to 135 (HPCQ). Residues asparagine 163, aspartate 223, and 227-228 (SM) contribute to the L-ornithine site. Residues 262-263 (CL) and arginine 290 each bind carbamoyl phosphate.

Belongs to the aspartate/ornithine carbamoyltransferase superfamily. OTCase family.

It localises to the cytoplasm. It carries out the reaction carbamoyl phosphate + L-ornithine = L-citrulline + phosphate + H(+). The protein operates within amino-acid biosynthesis; L-arginine biosynthesis; L-arginine from L-ornithine and carbamoyl phosphate: step 1/3. In terms of biological role, reversibly catalyzes the transfer of the carbamoyl group from carbamoyl phosphate (CP) to the N(epsilon) atom of ornithine (ORN) to produce L-citrulline. The chain is Ornithine carbamoyltransferase from Agrobacterium fabrum (strain C58 / ATCC 33970) (Agrobacterium tumefaciens (strain C58)).